Consider the following 25-residue polypeptide: Germin-like protein (25 aa).

The protein belongs to the germin family. Oligomer (believed to be a pentamer but probably hexamer). Post-translationally, the three different mass spectrometry results appear to arise from different glycosylation variants.

Its subcellular location is the secreted. It is found in the extracellular space. The protein resides in the apoplast. In terms of biological role, may play a role in plant defense. Probably has no oxalate oxidase activity even if the active site is conserved. In Citrus sinensis (Sweet orange), this protein is Germin-like protein.